Reading from the N-terminus, the 232-residue chain is tRNA1(Val) (adenine(37)-N6)-methyltransferase (232 aa).

Belongs to the methyltransferase superfamily. tRNA (adenine-N(6)-)-methyltransferase family.

Its subcellular location is the cytoplasm. It carries out the reaction adenosine(37) in tRNA1(Val) + S-adenosyl-L-methionine = N(6)-methyladenosine(37) in tRNA1(Val) + S-adenosyl-L-homocysteine + H(+). In terms of biological role, specifically methylates the adenine in position 37 of tRNA(1)(Val) (anticodon cmo5UAC). The chain is tRNA1(Val) (adenine(37)-N6)-methyltransferase from Haemophilus influenzae (strain PittEE).